We begin with the raw amino-acid sequence, 335 residues long: Acetyl-coenzyme A carboxylase carboxyl transferase subunit alpha (335 aa).

The region spanning 48–308 (VLESKVDALR…KSLLVEELRM (261 aa)) is the CoA carboxyltransferase C-terminal domain.

The protein belongs to the AccA family. Acetyl-CoA carboxylase is a heterohexamer composed of biotin carboxyl carrier protein (AccB), biotin carboxylase (AccC) and two subunits each of ACCase subunit alpha (AccA) and ACCase subunit beta (AccD).

It localises to the cytoplasm. The catalysed reaction is N(6)-carboxybiotinyl-L-lysyl-[protein] + acetyl-CoA = N(6)-biotinyl-L-lysyl-[protein] + malonyl-CoA. The protein operates within lipid metabolism; malonyl-CoA biosynthesis; malonyl-CoA from acetyl-CoA: step 1/1. Component of the acetyl coenzyme A carboxylase (ACC) complex. First, biotin carboxylase catalyzes the carboxylation of biotin on its carrier protein (BCCP) and then the CO(2) group is transferred by the carboxyltransferase to acetyl-CoA to form malonyl-CoA. The protein is Acetyl-coenzyme A carboxylase carboxyl transferase subunit alpha of Chlorobium phaeobacteroides (strain BS1).